Here is a 152-residue protein sequence, read N- to C-terminus: Small ribosomal subunit protein uS15 (152 aa).

Belongs to the universal ribosomal protein uS15 family. Part of the 30S ribosomal subunit.

The sequence is that of Small ribosomal subunit protein uS15 from Saccharolobus solfataricus (strain ATCC 35092 / DSM 1617 / JCM 11322 / P2) (Sulfolobus solfataricus).